Consider the following 170-residue polypeptide: Ribosome maturation factor RimM (170 aa).

Residues 97-170 form the PRC barrel domain; the sequence is KNEFYWTDLI…QIRVEWGSDW (74 aa).

This sequence belongs to the RimM family. Binds ribosomal protein uS19.

It is found in the cytoplasm. Its function is as follows. An accessory protein needed during the final step in the assembly of 30S ribosomal subunit, possibly for assembly of the head region. Essential for efficient processing of 16S rRNA. May be needed both before and after RbfA during the maturation of 16S rRNA. It has affinity for free ribosomal 30S subunits but not for 70S ribosomes. The polypeptide is Ribosome maturation factor RimM (Dechloromonas aromatica (strain RCB)).